Here is a 659-residue protein sequence, read N- to C-terminus: Anoctamin-10 (659 aa).

The Cytoplasmic portion of the chain corresponds to 1-207 (MRVTLSTLDT…DSIRSYFGET (207 aa)). The chain crosses the membrane as a helical span at residues 208–228 (IALYFGFLEYFTFALIPMAII). Topologically, residues 229 to 240 (GLPYYLFVWEDY) are extracellular. A helical transmembrane segment spans residues 241–261 (DKYVIFASFNLIWSTVILEVW). Topologically, residues 262-316 (KRGCANMTYRWGTLVMKRQFEEPRPGFHGVLGINSVTGREEPLYSSYKRQLRIYL) are cytoplasmic. Residues 317 to 337 (VSLPFVCLCLYFSLYVMMIYF) form a helical membrane-spanning segment. Residues 338 to 352 (DMEDWALSLHEDSGS) lie on the Extracellular side of the membrane. Residues 353–373 (EWTSLLLYVPSIVYAVVIEIM) form a helical membrane-spanning segment. Residues 374–400 (NRLYRYAAEFLTSWENHRLESAYQNHL) are Cytoplasmic-facing. A helical membrane pass occupies residues 401–421 (VLKVLVFNFLNCFASLFYIAF). The Extracellular segment spans residues 422 to 500 (VLKDMKLLRQ…YLGTFDDYLE (79 aa)). A helical transmembrane segment spans residues 501–521 (LFLQFGYVSLFSCVYPLAAAF). Residues 522-553 (AVLNNFTEVNSDALKMCRVFKRPFAEPSASIG) lie on the Cytoplasmic side of the membrane. The chain crosses the membrane as a helical span at residues 554–574 (VWQLAFETMSVISVVTNCALI). Topologically, residues 575–590 (GMSPQVNAVFPESKTD) are extracellular. Residues 591 to 611 (LVLIVVAVEHALLALKFILAF) form a helical membrane-spanning segment. The Cytoplasmic portion of the chain corresponds to 612–659 (AIPDKPRHIQQKLARLEFESLEALKQQQMKLVAENLKEEYQEDGKEAT).

It belongs to the anoctamin family. As to expression, predominant expression seen in epithelial tissues.

The protein resides in the cell membrane. Does not exhibit calcium-activated chloride channel (CaCC) activity. Can inhibit the activity of ANO1. The sequence is that of Anoctamin-10 (Ano10) from Mus musculus (Mouse).